A 544-amino-acid chain; its full sequence is Lysophosphatidylcholine acyltransferase 2 (544 aa).

Over 1-58 (MNRCAEAAAVAATVPGSGVGDSGLRPPMVPRQASFFPPPVPNPFVQQTRISAARRLQM) the chain is Cytoplasmic. The helical; Signal-anchor for type II membrane protein transmembrane segment at 59 to 79 (ILLGIILLPVRALLVGLVLLL) threads the bilayer. Residues 80–544 (AWPFAVISTV…EEGTSGKKVD (465 aa)) lie on the Lumenal side of the membrane. Residues 146-151 (HSTFFD) carry the HXXXXD motif motif. Residues 220-223 (EGTC) carry the EGTC motif motif. EF-hand domains lie at 391 to 426 (PVSDVLRQLFALFDRNNDGSIDFREYVIGLAVLCNP) and 428 to 463 (NTEDIIQVAFKLFDVDEDGYITEEEFCTILQASLGV). D404, N406, D408, S410, E415, D441, D443, D445, Y447, and E452 together coordinate Ca(2+). Residues 520–530 (TAPSVASNKVS) are compositionally biased toward polar residues. The disordered stretch occupies residues 520 to 544 (TAPSVASNKVSPESHEEGTSGKKVD). Over residues 531 to 544 (PESHEEGTSGKKVD) the composition is skewed to basic and acidic residues.

This sequence belongs to the 1-acyl-sn-glycerol-3-phosphate acyltransferase family.

It is found in the endoplasmic reticulum membrane. It localises to the golgi apparatus membrane. The protein resides in the cell membrane. Its subcellular location is the lipid droplet. The catalysed reaction is a 1-acyl-sn-glycero-3-phosphocholine + an acyl-CoA = a 1,2-diacyl-sn-glycero-3-phosphocholine + CoA. It catalyses the reaction a 1-O-alkyl-sn-glycero-3-phosphocholine + acetyl-CoA = a 1-O-alkyl-2-acetyl-sn-glycero-3-phosphocholine + CoA. It carries out the reaction a 1-acyl-sn-glycero-3-phosphate + an acyl-CoA = a 1,2-diacyl-sn-glycero-3-phosphate + CoA. The enzyme catalyses a 1-O-(1Z-alkenyl)-sn-glycero-3-phosphocholine + an acyl-CoA = a 1-O-(1Z-alkenyl)-2-acyl-sn-glycero-3-phosphocholine + CoA. The catalysed reaction is 1-hexadecanoyl-sn-glycero-3-phosphate + (9Z)-octadecenoyl-CoA = 1-hexadecanoyl-2-(9Z-octadecenoyl)-sn-glycero-3-phosphate + CoA. It catalyses the reaction 1-(9Z-octadecenoyl)-sn-glycero-3-phosphate + (9Z)-octadecenoyl-CoA = 1,2-di-(9Z-octadecenoyl)-sn-glycero-3-phosphate + CoA. It carries out the reaction 1-(9Z-octadecenoyl)-sn-glycero-3-phosphate + hexadecanoyl-CoA = 1-(9Z)-octadecenoyl-2-hexadecanoyl-sn-glycero-3-phosphate + CoA. The enzyme catalyses 1-heptadecanoyl-sn-glycero-3-phosphate + (9Z)-octadecenoyl-CoA = 1-heptadecanoyl-2-(9Z)-octadecenoyl-sn-glycero-3-phosphate + CoA. The catalysed reaction is 1-octadecanoyl-sn-glycero-3-phosphate + (9Z)-octadecenoyl-CoA = 1-octadecanoyl-2-(9Z-octadecenoyl)-sn-glycero-3-phosphate + CoA. It catalyses the reaction heptadecanoyl-CoA + 1-(9Z-octadecenoyl)-sn-glycero-3-phosphate = 1-(9Z)-octadecenoyl-2-heptadecanoyl-sn-glycero-3-phosphate + CoA. It carries out the reaction 1-(9Z-octadecenoyl)-sn-glycero-3-phosphate + (9Z,12Z)-octadecadienoyl-CoA = 1-(9Z)-octadecenoyl-2-(9Z,12Z)-octadecadienoyl-sn-glycero-3-phosphate + CoA. The enzyme catalyses 1-(9Z-octadecenoyl)-sn-glycero-3-phosphate + tetradecanoyl-CoA = 1-(9Z)-octadecenoyl-2-tetradecanoyl-sn-glycero-3-phosphate + CoA. The catalysed reaction is pentadecanoyl-CoA + 1-(9Z-octadecenoyl)-sn-glycero-3-phosphate = 1-(9Z)-octadecenoyl-2-pentadecanoyl-sn-glycero-3-phosphate + CoA. It catalyses the reaction nonadecanoyl-CoA + 1-(9Z-octadecenoyl)-sn-glycero-3-phosphate = 1-(9Z)-octadecenoyl-2-nonadecanoyl-sn-glycero-3-phosphate + CoA. It carries out the reaction 1-hexadecanoyl-sn-glycero-3-phosphocholine + (9Z)-octadecenoyl-CoA = 1-hexadecanoyl-2-(9Z-octadecenoyl)-sn-glycero-3-phosphocholine + CoA. The enzyme catalyses 1-O-hexadecyl-sn-glycero-3-phosphocholine + acetyl-CoA = 1-O-hexadecyl-2-acetyl-sn-glycero-3-phosphocholine + CoA. The catalysed reaction is 1-O-octadecyl-sn-glycero-3-phosphocholine + acetyl-CoA = 1-O-octadecyl-2-acetyl-sn-glycero-3-phosphocholine + CoA. It catalyses the reaction 1-hexadecanoyl-sn-glycero-3-phosphocholine + acetyl-CoA = 1-hexadecanoyl-2-acetyl-sn-glycero-3-phosphocholine + CoA. It carries out the reaction 1-octadecanoyl-sn-glycero-3-phosphocholine + acetyl-CoA = 1-octadecanoyl-2-acetyl-sn-glycero-3-phosphocholine + CoA. The enzyme catalyses a 1-O-(1Z-alkenyl)-sn-glycero-3-phosphocholine + acetyl-CoA = 1-O-(1Z)-alkenyl-2-acetyl-sn-glycero-3-phosphocholine + CoA. The catalysed reaction is 1-O-octadecyl-sn-glycero-3-phosphocholine + (5Z,8Z,11Z,14Z)-eicosatetraenoyl-CoA = 1-O-octadecyl-2-(5Z,8Z,11Z,14Z)-eicosatetraenoyl-sn-glycero-3-phosphocholine + CoA. The protein operates within lipid metabolism; phospholipid metabolism. Its function is as follows. Exhibits both acyltransferase and acetyltransferase activities. Activity is calcium-dependent. Catalyzes the conversion of lysophosphatidylcholine (1-acyl-sn-glycero-3-phosphocholine or LPC) into phosphatidylcholine (1,2-diacyl-sn-glycero-3-phosphocholine or PC). Catalyzes the conversion 1-acyl-sn-glycerol-3-phosphate (lysophosphatidic acid or LPA) into 1,2-diacyl-sn-glycerol-3-phosphate (phosphatidic acid or PA) by incorporating an acyl moiety at the sn-2 position of the glycerol backbone. Involved in platelet-activating factor (PAF) biosynthesis by catalyzing the conversion of the PAF precursor, 1-O-alkyl-sn-glycero-3-phosphocholine (lyso-PAF) into 1-O-alkyl-2-acetyl-sn-glycero-3-phosphocholine (PAF). Also converts lyso-PAF to 1-O-alkyl-2-acyl-sn-glycero-3-phosphocholine (PC), a major component of cell membranes and a PAF precursor. Under resting conditions, acyltransferase activity is preferred. Upon acute inflammatory stimulus, acetyltransferase activity is enhanced and PAF synthesis increases. Involved in the regulation of lipid droplet number and size. The sequence is that of Lysophosphatidylcholine acyltransferase 2 (Lpcat2) from Rattus norvegicus (Rat).